The sequence spans 105 residues: Protamine-2 (105 aa).

Residues 1–74 (MVRYRMRSPS…RRSCRRRRRH (74 aa)) form a disordered region. A phosphoserine mark is found at Ser-8 and Ser-10. The span at 33 to 42 (NPERVEDYGR) shows a compositional bias: basic and acidic residues. Over residues 43 to 74 (THRGHHRHRRCSRKRLHRIHKRRRSCRRRRRH) the composition is skewed to basic residues.

The protein belongs to the protamine P2 family. Interacts with TDRP. In terms of processing, proteolytic processing into mature chains is required for histone eviction during spermatogenesis. Transition proteins (TNP1 and TNP2) are required for processing. As to expression, testis.

It is found in the nucleus. The protein localises to the chromosome. In terms of biological role, protamines substitute for histones in the chromatin of sperm during the haploid phase of spermatogenesis. They compact sperm DNA into a highly condensed, stable and inactive complex. The polypeptide is Protamine-2 (Prm2) (Rattus tunneyi (Tunney's rat)).